We begin with the raw amino-acid sequence, 394 residues long: Gastricsin (394 aa).

A signal peptide spans 1 to 16 (MKWMVVVLLCLPLLEA). Positions 17 to 65 (TQIKVPLKKIKSIREVLREKGLLGDFLKNHKPQHARKFFRNRLAKTGDF) are cleaved as a propeptide — activation peptide. The 313-residue stretch at 79-391 (YFGQISLGTP…DLANNRVGFA (313 aa)) folds into the Peptidase A1 domain. Residue D97 is part of the active site. 2 disulfides stabilise this stretch: C110–C115 and C273–C277. The active site involves T283. A disulfide bridge connects residues C316 and C349.

The protein belongs to the peptidase A1 family.

Its subcellular location is the secreted. It catalyses the reaction More restricted specificity than pepsin A, but shows preferential cleavage at Tyr-|-Xaa bonds. High activity on hemoglobin.. In terms of biological role, hydrolyzes a variety of proteins. The sequence is that of Gastricsin (PGC) from Cavia porcellus (Guinea pig).